A 376-amino-acid polypeptide reads, in one-letter code: Probable ATP-dependent RNA helicase YfmL (376 aa).

A Helicase ATP-binding domain is found at 35–205; that stretch reads AQLIMDGKDV…RELAQEPEVL (171 aa). 48-55 contributes to the ATP binding site; it reads SPTGTGKT. Positions 153–156 match the DEAD box motif; that stretch reads DETD. One can recognise a Helicase C-terminal domain in the interval 231–374; sequence KLLQKLSRLE…EAVYAGGKLK (144 aa).

It belongs to the DEAD box helicase family.

The enzyme catalyses ATP + H2O = ADP + phosphate + H(+). In terms of biological role, a probable DEAD-box RNA helicase that plays a role in ribosomal 50S subunit assembly. May be a non-specific RNA helicase. The protein is Probable ATP-dependent RNA helicase YfmL (yfmL) of Bacillus subtilis (strain 168).